A 171-amino-acid polypeptide reads, in one-letter code: Putative phosphoesterase BPUM_1117 (171 aa).

His-34 acts as the Proton donor in catalysis. 2 consecutive short sequence motifs (HXTX) follow at residues 34-37 (HLTL) and 115-118 (HVTV). His-115 acts as the Proton acceptor in catalysis.

It belongs to the 2H phosphoesterase superfamily. YjcG family.

In Bacillus pumilus (strain SAFR-032), this protein is Putative phosphoesterase BPUM_1117.